Here is a 487-residue protein sequence, read N- to C-terminus: L-tartrate/succinate antiporter (487 aa).

Residues 1–9 (MKPSTEWWR) lie on the Periplasmic side of the membrane. A helical transmembrane segment spans residues 10–30 (YLAPLAVIAIIALLPVPAGLE). Over 31–32 (NH) the chain is Cytoplasmic. 2 helical membrane-spanning segments follow: residues 33–53 (TWLY…EPVP) and 54–74 (GAVV…WLLF). Residues 75–92 (SPEQLAQPGFKFTAKSLS) lie on the Cytoplasmic side of the membrane. The helical transmembrane segment at 93-113 (WAVSGFSNSVIWLIFAAFMFG) threads the bilayer. The Periplasmic portion of the chain corresponds to 114–136 (TGYEKTGLGRRIALILVKKMGHR). Residues 137–157 (TLFLGYAVMFSELILAPVTPS) form a helical membrane-spanning segment. Over 158–188 (NSARGAGIIYPIIRNLPPLYQSQPNDSSSRS) the chain is Cytoplasmic. Residues 189–209 (IGSYIMWMGIVADCVTSAIFL) traverse the membrane as a helical segment. Residues 210-235 (TAMAPNLLLIGLMKSASHATLSWGDW) lie on the Periplasmic side of the membrane. Residues 236-256 (FLGMLPLSILLVLLVPWLAYV) traverse the membrane as a helical segment. The Cytoplasmic portion of the chain corresponds to 257-291 (LYPPVLKSGDQVPRWAETELQAMGPLCSREKRMLG). 2 consecutive transmembrane segments (helical) span residues 292-312 (LMVG…AAMV) and 313-333 (GYSV…DIVS). Topologically, residues 334–339 (NKAAWN) are cytoplasmic. Residues 340-360 (VFFWLASLITLATGLNNTGFI) traverse the membrane as a helical segment. The Periplasmic segment spans residues 361-369 (SWFGKLLAG). The helical transmembrane segment at 370–390 (SLSGYSPTMVMVALIVVFYLL) threads the bilayer. The Cytoplasmic portion of the chain corresponds to 391–392 (RY). A helical transmembrane segment spans residues 393–413 (FFASATAYTSALAPMMIAAAL). Residues 414–417 (AMPE) lie on the Periplasmic side of the membrane. The helical transmembrane segment at 418–438 (IPLPVFCLMVGAAIGLGSILT) threads the bilayer. Residues 439 to 464 (PYATGPSPIYYGSGYLPTADYWRLGA) are Cytoplasmic-facing. Residues 465–485 (IFGLIFLVLLVITGLLWMPVV) form a helical membrane-spanning segment. Topologically, residues 486–487 (LL) are periplasmic.

This sequence belongs to the SLC13A/DASS transporter (TC 2.A.47) family. DIT1 subfamily.

The protein localises to the cell inner membrane. The catalysed reaction is (2R,3R)-tartrate(out) + succinate(in) = (2R,3R)-tartrate(in) + succinate(out). Its function is as follows. Catalyzes the uptake of tartrate in exchange for intracellular succinate. Essential for anaerobic L-tartrate fermentation. The protein is L-tartrate/succinate antiporter of Escherichia coli (strain K12).